Reading from the N-terminus, the 452-residue chain is Glycoprotein endo-alpha-1,2-mannosidase-like protein (452 aa).

Over 1–8 the chain is Cytoplasmic; that stretch reads MARRRRRA. A helical; Signal-anchor for type II membrane protein transmembrane segment spans residues 9 to 29; that stretch reads CIALFLVLLFAFGTLMGLRTL. The Lumenal portion of the chain corresponds to 30–452; the sequence is KAPDGLPALG…FIKEKEQWLM (423 aa). The disordered stretch occupies residues 40-90; sequence PGPELAPFERRPEGNPAPARAPAAPAAPPPPPPRTAAPRASLGPAEADPAP. The segment covering 64-74 has biased composition (pro residues); it reads PAAPPPPPPRT.

It belongs to the glycosyl hydrolase 99 family.

Its subcellular location is the golgi apparatus membrane. This is Glycoprotein endo-alpha-1,2-mannosidase-like protein (Maneal) from Mus musculus (Mouse).